A 419-amino-acid polypeptide reads, in one-letter code: Glutamate dehydrogenase (419 aa).

Lys105 is an active-site residue. 219 to 225 (GYGNAGY) is a binding site for NAD(+).

The protein belongs to the Glu/Leu/Phe/Val dehydrogenases family. As to quaternary structure, homohexamer.

It carries out the reaction L-glutamate + NAD(+) + H2O = 2-oxoglutarate + NH4(+) + NADH + H(+). It catalyses the reaction L-glutamate + NADP(+) + H2O = 2-oxoglutarate + NH4(+) + NADPH + H(+). This Thermococcus profundus protein is Glutamate dehydrogenase (gdhA).